The following is a 536-amino-acid chain: Chaperonin GroEL 2 (536 aa).

ATP contacts are provided by residues 29–32, 86–90, glycine 412, and aspartate 495; these read TLGP and DGTTT.

It belongs to the chaperonin (HSP60) family. Forms a cylinder of 14 subunits composed of two heptameric rings stacked back-to-back. Interacts with the co-chaperonin GroES.

Its subcellular location is the cytoplasm. The catalysed reaction is ATP + H2O + a folded polypeptide = ADP + phosphate + an unfolded polypeptide.. Functionally, together with its co-chaperonin GroES, plays an essential role in assisting protein folding. The GroEL-GroES system forms a nano-cage that allows encapsulation of the non-native substrate proteins and provides a physical environment optimized to promote and accelerate protein folding. The protein is Chaperonin GroEL 2 of Arthrobacter sp. (strain FB24).